Consider the following 282-residue polypeptide: MYFKRYLQLAKPGIIFGNLITLTGGFLLATHREIGFEYLPLFVYVMIGVALMIAAGCVFNNIYDQDIDSSMTRTQNRPLVTGDISVIQATIYGTILLILSCLVLYYLVNLLTLWIIIIGFIVYVGIYTVSKRLTIHATVLGGISGAIPPVAGYTAVVNILDYNALALFLILFFWQIPHSYAIAMLYIDDYKKVKLPMLPIVKGIAYTKKIMLFYLALFVVSCALPAVLGSADLFSFIVCMLVALFWMYKSIQSYRTDTDRVFAKTVFKFSIIVITAICLTMG.

Helical transmembrane passes span 9 to 29 (LAKPGIIFGNLITLTGGFLLA), 39 to 59 (LPLFVYVMIGVALMIAAGCVF), 79 to 99 (LVTGDISVIQATIYGTILLIL), 102 to 122 (LVLYYLVNLLTLWIIIIGFIV), 139 to 159 (VLGGISGAIPPVAGYTAVVNI), 165 to 185 (LALFLILFFWQIPHSYAIAML), 210 to 230 (IMLFYLALFVVSCALPAVLGS), 231 to 251 (ADLFSFIVCMLVALFWMYKSI), and 261 to 281 (VFAKTVFKFSIIVITAICLTM).

It belongs to the UbiA prenyltransferase family. Protoheme IX farnesyltransferase subfamily.

It is found in the cell inner membrane. It carries out the reaction heme b + (2E,6E)-farnesyl diphosphate + H2O = Fe(II)-heme o + diphosphate. Its pathway is porphyrin-containing compound metabolism; heme O biosynthesis; heme O from protoheme: step 1/1. Its function is as follows. Converts heme B (protoheme IX) to heme O by substitution of the vinyl group on carbon 2 of heme B porphyrin ring with a hydroxyethyl farnesyl side group. In Francisella tularensis subsp. holarctica (strain LVS), this protein is Protoheme IX farnesyltransferase.